The chain runs to 291 residues: ATP synthase gamma chain (291 aa).

Belongs to the ATPase gamma chain family. F-type ATPases have 2 components, CF(1) - the catalytic core - and CF(0) - the membrane proton channel. CF(1) has five subunits: alpha(3), beta(3), gamma(1), delta(1), epsilon(1). CF(0) has three main subunits: a, b and c.

It is found in the cell membrane. Functionally, produces ATP from ADP in the presence of a proton gradient across the membrane. The gamma chain is believed to be important in regulating ATPase activity and the flow of protons through the CF(0) complex. The chain is ATP synthase gamma chain from Streptococcus equi subsp. equi (strain 4047).